The chain runs to 543 residues: uncharacterized protein (543 aa).

A PE domain is found at 1–93 (MSFVTAAPEM…GGAYSSAEAA (93 aa)). The disordered stretch occupies residues 194–214 (GGAGGPGGPTDVPAGTGGAGG).

Belongs to the mycobacterial PE family. PGRS subfamily.

This is an uncharacterized protein from Mycobacterium tuberculosis (strain CDC 1551 / Oshkosh).